The following is a 20-amino-acid chain: Large ribosomal subunit protein bL31 (20 aa).

Zn(2+)-binding residues include Xaa-16 and Xaa-18.

Belongs to the bacterial ribosomal protein bL31 family. Type A subfamily. Part of the 50S ribosomal subunit. Requires Zn(2+) as cofactor.

Functionally, binds the 23S rRNA. In Ectopseudomonas mendocina (Pseudomonas mendocina), this protein is Large ribosomal subunit protein bL31 (rpmE).